Reading from the N-terminus, the 1032-residue chain is Calmodulin-binding transcription activator 3 (1032 aa).

The CG-1 DNA-binding region spans 15–141 (VGQILSEARH…YLEVKGSRVS (127 aa)). The segment at 146–197 (RMQRTEDAARSPQETGDALTSEHDGYASCSFNQNDHSNHSQTTDSASVNGFH) is disordered. Positions 174–195 (CSFNQNDHSNHSQTTDSASVNG) are enriched in polar residues. A Phosphoserine modification is found at Ser272. ANK repeat units follow at residues 661–690 (GGQGVLHFAASLGYNWALEPTIIAGVSVDF), 694–723 (NGWTALHWAAFFGRERIIGSLIALGAAPGT), and 733–762 (SGSTPSDLAYANGHKGIAGYLSEYALRAHV). IQ domains are found at residues 852-881 (VQAAAIRIQNKFRGYKGRKDYLITRQRIIK) and 875-904 (TRQRIIKIQAHVRGYQFRKNYRKIIWSVGV). A calmodulin-binding region spans residues 900–922 (WSVGVLEKVILRWRRKGAGLRGF). Residues 945–987 (KQGRKQTEDRLQKALARVKSMVQYPEARDQYRRLLNVVNDIQE) adopt a coiled-coil conformation. Ser964 carries the post-translational modification Phosphoserine.

It belongs to the CAMTA family. Interacts with SR1IP1. Interacts with DSC1. Ubiquinated during pathogen infection. Ubiquitination leads to its subsequent proteasome-dependent degradation, thus allowing the establishment of plant defense response. As to expression, expressed in roots, stems, leaves, carpels, and siliques, but not in stigmas or other parts of the flower.

The protein localises to the nucleus. Functionally, transcription activator that binds to the DNA consensus sequence 5'-[ACG]CGCG[GTC]-3'. Binds calmodulin in a calcium-dependent manner in vitro. Regulates transcriptional activity in response to calcium signals. Involved in freezing tolerance in association with CAMTA1 and CAMTA2. Required for the cold-induced expression of DREB1B/CBF1, DREB1C/CBF2, ZAT12 and GOLS3. Involved in response to cold. Contributes together with CAMTA5 to the positive regulation of the cold-induced expression of DREB1A/CBF3, DREB1B/CBF1 and DREB1C/CBF2. Involved together with CAMTA2 and CAMTA4 in the positive regulation of a general stress response (GSR). Involved in the regulation of GSR amplitude downstream of MEKK1. Involved in the regulation of a set of genes involved in defense responses against pathogens. Involved in the regulation of both basal resistance and systemic acquired resistance (SAR). Acts as negative regulator of plant immunity. Binds to the promoter of the defense-related gene EDS1 and represses its expression. Binds to the promoter of the defense-related gene NDR1 and represses its expression. Involved in defense against insects. Required for tolerance to the generalist herbivore Trichoplusia ni, and contributes to the positive regulation of genes associated with glucosinolate metabolism. Required for tolerance to Bradysia impatiens larvae. Mediates herbivore-induced wound response. Required for wound-induced jasmonate accumulation. Involved in the regulation of ethylene-induced senescence by binding to the promoter of the senescence-inducer gene EIN3 and repressing its expression. The polypeptide is Calmodulin-binding transcription activator 3 (Arabidopsis thaliana (Mouse-ear cress)).